Here is a 245-residue protein sequence, read N- to C-terminus: 1-(5-phosphoribosyl)-5-[(5-phosphoribosylamino)methylideneamino] imidazole-4-carboxamide isomerase (245 aa).

Asp-10 functions as the Proton acceptor in the catalytic mechanism. Asp-135 acts as the Proton donor in catalysis.

This sequence belongs to the HisA/HisF family.

The protein localises to the cytoplasm. It catalyses the reaction 1-(5-phospho-beta-D-ribosyl)-5-[(5-phospho-beta-D-ribosylamino)methylideneamino]imidazole-4-carboxamide = 5-[(5-phospho-1-deoxy-D-ribulos-1-ylimino)methylamino]-1-(5-phospho-beta-D-ribosyl)imidazole-4-carboxamide. It functions in the pathway amino-acid biosynthesis; L-histidine biosynthesis; L-histidine from 5-phospho-alpha-D-ribose 1-diphosphate: step 4/9. The sequence is that of 1-(5-phosphoribosyl)-5-[(5-phosphoribosylamino)methylideneamino] imidazole-4-carboxamide isomerase from Methanosarcina acetivorans (strain ATCC 35395 / DSM 2834 / JCM 12185 / C2A).